The chain runs to 916 residues: DNA repair endonuclease XPF (916 aa).

Positions 1–457 (MESGQPARRI…EVWMKFRKED (457 aa)) are helicase-like. 2 leucine-zipper regions span residues 233-254 (LNACLKELKCHNPSLEVEDLSL) and 270-298 (LDPLWHQLGAKTKSLVQDLKILRTLLQYL). Residue lysine 289 is modified to N6-acetyllysine. The tract at residues 460–487 (KRIRKSHKRPKDPQNKERASTKERTLKK) is disordered. Over residues 470–483 (KDPQNKERASTKER) the composition is skewed to basic and acidic residues. Positions 486–491 (KKKKRK) match the Nuclear localization signal motif. Lysine 500 is covalently cross-linked (Glycyl lysine isopeptide (Lys-Gly) (interchain with G-Cter in SUMO2)). Disordered stretches follow at residues 502-526 (EELEEEGDVEEGYRREISSSPESCP) and 660-679 (TASADVSTDTRKAGGQEQNG). At serine 521 the chain carries Phosphoserine. The interval 658 to 813 (RGTASADVST…PSPHATAELF (156 aa)) is nuclease. In terms of domain architecture, ERCC4 spans 683-763 (SIVVDMREFR…RPVLLIEFDP (81 aa)). Phosphoserine is present on serine 764. A hhH2, dimerization with ERCC1 region spans residues 837 to 905 (TLPESEKYNP…QLYDFIHTSF (69 aa)). Lysine 911 is subject to N6-acetyllysine.

This sequence belongs to the XPF family. In terms of assembly, heterodimer composed of ERCC1 and ERCC4/XPF. Interacts with SLX4/BTBD12; this interaction is direct and links the ERCC1-ERCC4/XPF complex to SLX4, which may coordinate the action of the structure-specific endonuclease during DNA repair. It depends on Mg(2+) as a cofactor. In terms of processing, acetylation at Lys-911 by KAT5 promotes interaction with ERCC1 by disrupting a salt bridge between Glu-907 and Lys-911, thereby exposing a second binding site for ERCC1. Deacetylated by SIRT1.

It localises to the nucleus. The protein resides in the chromosome. Catalytic component of a structure-specific DNA repair endonuclease responsible for the 5-prime incision during DNA repair, and which is essential for nucleotide excision repair (NER) and interstrand cross-link (ICL) repair. The chain is DNA repair endonuclease XPF from Homo sapiens (Human).